The following is a 175-amino-acid chain: Lipopolysaccharide export system protein LptH (175 aa).

The first 24 residues, 1–24, serve as a signal peptide directing secretion; the sequence is MRFVNTLPLIFGLTAALGSSMALA.

Belongs to the LptA family. Component of the lipopolysaccharide transport and assembly complex. Mainly exists as a dimer in solution. Tends to oligomerize already in solution. The protomers follow one another in a head-to-tail fashion throughout the crystal lattice, yielding a continuous fiber arrangement.

It localises to the periplasm. Its function is as follows. Involved in the assembly of lipopolysaccharide (LPS). Required for the translocation of LPS from the inner membrane to the outer membrane. May form a bridge between the inner membrane and the outer membrane, via interactions with LptC and LptD, thereby facilitating LPS transfer across the periplasm. Binds LPS. Important for cell envelope stability and essential for growth, cell viability and ability to cause infection in different animal models. This Pseudomonas aeruginosa (strain ATCC 15692 / DSM 22644 / CIP 104116 / JCM 14847 / LMG 12228 / 1C / PRS 101 / PAO1) protein is Lipopolysaccharide export system protein LptH.